The primary structure comprises 260 residues: 5'-nucleotidase SurE (260 aa).

Positions 8, 9, 39, and 91 each coordinate a divalent metal cation.

Belongs to the SurE nucleotidase family. Requires a divalent metal cation as cofactor.

It is found in the cytoplasm. The enzyme catalyses a ribonucleoside 5'-phosphate + H2O = a ribonucleoside + phosphate. Nucleotidase that shows phosphatase activity on nucleoside 5'-monophosphates. The protein is 5'-nucleotidase SurE of Acidovorax ebreus (strain TPSY) (Diaphorobacter sp. (strain TPSY)).